Reading from the N-terminus, the 641-residue chain is Bifunctional protein glk (641 aa).

Residues Met-1–Leu-21 form a disordered region. The interval Met-1 to Ser-340 is glucokinase. Position 23-28 (Ala-23–Thr-28) interacts with ATP. The 77-residue stretch at Ser-341–Thr-417 folds into the HTH rpiR-type domain. Residues Ser-341–Glu-641 form a putative HTH-type transcriptional regulator region. The H-T-H motif DNA-binding region spans Ile-377–Arg-396. Residues Ala-461–Ser-600 enclose the SIS domain. A helical transmembrane segment spans residues Ser-576–Ile-596.

It in the N-terminal section; belongs to the bacterial glucokinase family.

The protein localises to the membrane. The catalysed reaction is D-glucose + ATP = D-glucose 6-phosphate + ADP + H(+). The polypeptide is Bifunctional protein glk (glk) (Burkholderia thailandensis (strain ATCC 700388 / DSM 13276 / CCUG 48851 / CIP 106301 / E264)).